Here is a 24-residue protein sequence, read N- to C-terminus: Unknown protein NF004 from 2D-PAGE (24 aa).

The chain is Unknown protein NF004 from 2D-PAGE from Naegleria fowleri (Brain eating amoeba).